The sequence spans 188 residues: UPF0398 protein SE_1135 (188 aa).

The protein belongs to the UPF0398 family.

This is UPF0398 protein SE_1135 from Staphylococcus epidermidis (strain ATCC 12228 / FDA PCI 1200).